We begin with the raw amino-acid sequence, 434 residues long: GTPase Obg (434 aa).

The region spanning 1–158 (MFLDTAKIKV…RELQLELKIL (158 aa)) is the Obg domain. The region spanning 159-336 (ADVGLVGFPS…LLDATAELLD (178 aa)) is the OBG-type G domain. GTP-binding positions include 165–172 (GFPSVGKS), 190–194 (FTTIV), 212–215 (DLPG), 282–285 (NKMD), and 317–319 (SGL). Mg(2+)-binding residues include serine 172 and threonine 192. One can recognise an OCT domain in the interval 356–434 (GFDEEEKAFE…IGKFEFEFVD (79 aa)).

It belongs to the TRAFAC class OBG-HflX-like GTPase superfamily. OBG GTPase family. In terms of assembly, monomer. The cofactor is Mg(2+).

The protein localises to the cytoplasm. An essential GTPase which binds GTP, GDP and possibly (p)ppGpp with moderate affinity, with high nucleotide exchange rates and a fairly low GTP hydrolysis rate. Plays a role in control of the cell cycle, stress response, ribosome biogenesis and in those bacteria that undergo differentiation, in morphogenesis control. The sequence is that of GTPase Obg from Streptococcus pneumoniae (strain ATCC 700669 / Spain 23F-1).